The following is a 213-amino-acid chain: Large ribosomal subunit protein uL3 (213 aa).

Positions 131–168 (GPMSHGSKNHRLPGSTGAGTTPGRVYPGKRMAGRSGND) are disordered.

This sequence belongs to the universal ribosomal protein uL3 family. In terms of assembly, part of the 50S ribosomal subunit. Forms a cluster with proteins L14 and L19.

Its function is as follows. One of the primary rRNA binding proteins, it binds directly near the 3'-end of the 23S rRNA, where it nucleates assembly of the 50S subunit. The sequence is that of Large ribosomal subunit protein uL3 from Synechococcus elongatus (strain ATCC 33912 / PCC 7942 / FACHB-805) (Anacystis nidulans R2).